A 391-amino-acid chain; its full sequence is Formate-dependent phosphoribosylglycinamide formyltransferase (391 aa).

Residues glutamate 20–leucine 21 and glutamate 80 contribute to the N(1)-(5-phospho-beta-D-ribosyl)glycinamide site. ATP-binding positions include arginine 112, lysine 153, serine 158 to glutamine 163, glutamate 193 to valine 196, and glutamate 201. The ATP-grasp domain maps to arginine 117 to threonine 306. 2 residues coordinate Mg(2+): glutamate 265 and glutamate 277. Residues aspartate 284, lysine 354, and arginine 361 to arginine 362 each bind N(1)-(5-phospho-beta-D-ribosyl)glycinamide.

Belongs to the PurK/PurT family. Homodimer.

The enzyme catalyses N(1)-(5-phospho-beta-D-ribosyl)glycinamide + formate + ATP = N(2)-formyl-N(1)-(5-phospho-beta-D-ribosyl)glycinamide + ADP + phosphate + H(+). It participates in purine metabolism; IMP biosynthesis via de novo pathway; N(2)-formyl-N(1)-(5-phospho-D-ribosyl)glycinamide from N(1)-(5-phospho-D-ribosyl)glycinamide (formate route): step 1/1. In terms of biological role, involved in the de novo purine biosynthesis. Catalyzes the transfer of formate to 5-phospho-ribosyl-glycinamide (GAR), producing 5-phospho-ribosyl-N-formylglycinamide (FGAR). Formate is provided by PurU via hydrolysis of 10-formyl-tetrahydrofolate. The protein is Formate-dependent phosphoribosylglycinamide formyltransferase of Aliivibrio fischeri (strain ATCC 700601 / ES114) (Vibrio fischeri).